The primary structure comprises 296 residues: Protein RarD (296 aa).

At 1-11 (MDAKQTRQGVL) the chain is on the cytoplasmic side. The helical transmembrane segment at 12 to 34 (LALAAYFIWGIAPAYFKLIYYVP) threads the bilayer. An EamA domain is found at 18-145 (FIWGIAPAYF…AICGVLVQLW (128 aa)). Residues 35 to 37 (ADE) lie on the Periplasmic side of the membrane. The helical transmembrane segment at 38 to 60 (ILTHRVIWSFFFMVVLMSICRQW) threads the bilayer. Over 61 to 72 (SYLKTLIQTPQK) the chain is Cytoplasmic. A helical transmembrane segment spans residues 73 to 95 (IFMLAVSAVLIGGNWLLFIWAVN). At 96–99 (NHHM) the chain is on the periplasmic side. The chain crosses the membrane as a helical span at residues 100–122 (LEASLGYFINPLVNIVLGMIFLG). Residues 123–128 (ERFRRM) lie on the Cytoplasmic side of the membrane. A helical transmembrane segment spans residues 129–146 (QWLAVILAICGVLVQLWT). At 147–149 (FGS) the chain is on the periplasmic side. Residues 150-167 (LPIIALGLAFSFAFYGLV) traverse the membrane as a helical segment. The Cytoplasmic segment spans residues 168-179 (RKKIAVEAQTGM). The chain crosses the membrane as a helical span at residues 180–197 (LIETMWLLPVAAIYLFAI). Over 198–211 (ADSSTSHMGQNPMS) the chain is Periplasmic. A helical transmembrane segment spans residues 212–234 (LNLLLIAAGIVTTVPLLCFTAAA). Residues 235-238 (TRLR) are Cytoplasmic-facing. Residues 239–261 (LSTLGFFQYIGPTLMFLLAVTFY) traverse the membrane as a helical segment. The Periplasmic segment spans residues 262–270 (GEKPGADKM). Residues 271-290 (VTFAFIWVALAIFVMDAIYT) traverse the membrane as a helical segment. Over 291–296 (QRRTSK) the chain is Cytoplasmic.

This sequence belongs to the EamA transporter family.

The protein resides in the cell inner membrane. This Escherichia coli (strain K12) protein is Protein RarD (rarD).